The chain runs to 422 residues: Imidazolonepropionase (422 aa).

Residues His-82 and His-84 each coordinate Fe(3+). Positions 82 and 84 each coordinate Zn(2+). Positions 91, 154, and 187 each coordinate 4-imidazolone-5-propanoate. Tyr-154 is a binding site for N-formimidoyl-L-glutamate. His-252 is a Fe(3+) binding site. His-252 contributes to the Zn(2+) binding site. Glu-255 contributes to the 4-imidazolone-5-propanoate binding site. Asp-327 is a binding site for Fe(3+). Residue Asp-327 coordinates Zn(2+). Asn-329 and Gly-331 together coordinate N-formimidoyl-L-glutamate. Position 332 (Ser-332) interacts with 4-imidazolone-5-propanoate.

It belongs to the metallo-dependent hydrolases superfamily. HutI family. It depends on Zn(2+) as a cofactor. Fe(3+) is required as a cofactor.

The protein localises to the cytoplasm. It carries out the reaction 4-imidazolone-5-propanoate + H2O = N-formimidoyl-L-glutamate. Its pathway is amino-acid degradation; L-histidine degradation into L-glutamate; N-formimidoyl-L-glutamate from L-histidine: step 3/3. Its function is as follows. Catalyzes the hydrolytic cleavage of the carbon-nitrogen bond in imidazolone-5-propanoate to yield N-formimidoyl-L-glutamate. It is the third step in the universal histidine degradation pathway. The protein is Imidazolonepropionase of Alkaliphilus oremlandii (strain OhILAs) (Clostridium oremlandii (strain OhILAs)).